Consider the following 605-residue polypeptide: Glycerophosphodiester phosphodiesterase domain-containing protein 5 (605 aa).

Topologically, residues 1-42 (MVRHQPLQYYEPQLCLSCLTGIYGCRWKRYQRSHDDTTPWER) are cytoplasmic. Intrachain disulfides connect C15–C18 and C25–C571. Residues 43-63 (LWFLLLTFTFGLTLTWLYFWW) traverse the membrane as a helical segment. At 64–89 (EVHNDYDEFNWYLYNRMGYWSDWPVP) the chain is on the extracellular side. Residues 90–110 (ILVTTAAAFAYIAGLLVLALC) form a helical membrane-spanning segment. Residues 111 to 125 (HIAVGQQMNLHWLHK) lie on the Cytoplasmic side of the membrane. Residues 126 to 146 (IGLVVILASTVVAMSAVAQLW) traverse the membrane as a helical segment. The Extracellular portion of the chain corresponds to 147 to 160 (EDEWEVLLISLQGT). The chain crosses the membrane as a helical span at residues 161 to 181 (APFLHVGAVAAVTMLSWIVAG). Topologically, residues 182-192 (QFARAERTSSQ) are cytoplasmic. The chain crosses the membrane as a helical span at residues 193–213 (VTILCTFFTVVFALYLAPLTI). Residues 214–496 (SSPCIMEKKD…PLWIMPPDEY (283 aa)) lie on the Extracellular side of the membrane. Residues 228–485 (PALIGHRGAP…DNSHALSQVP (258 aa)) enclose the GP-PDE domain. N-linked (GlcNAc...) asparagine glycosylation is found at N301, N336, N352, N374, and N448. A helical transmembrane segment spans residues 497–517 (CLMWVTADLVSFTLIVGIFVL). Residues 518–605 (QKWRLGGIRS…TKTLIERSGR (88 aa)) are Cytoplasmic-facing. Positions 582–605 (STATPVGPRGGGSHTKTLIERSGR) are disordered.

The protein belongs to the glycerophosphoryl diester phosphodiesterase family. As to quaternary structure, interacts with PRDX1; forms a mixed-disulfide with PRDX1, leading to disrupt intramolecular disulfide bond between Cys-25 and Cys-571. Intramolecular disulfide bond between Cys-25 and Cys-571 is reduced by PRDX1.

Its subcellular location is the endomembrane system. It localises to the cytoplasm. It is found in the perinuclear region. The protein resides in the cell projection. The protein localises to the growth cone. The enzyme catalyses a 1,2-diacyl-sn-glycero-3-phospho-(1D-myo-inositol-4,5-bisphosphate) + H2O = 1D-myo-inositol 1,4,5-trisphosphate + a 1,2-diacyl-sn-glycerol + H(+). It catalyses the reaction sn-glycerol 3-phosphocholine + H2O = sn-glycerol 3-phosphate + choline + H(+). In terms of biological role, glycerophosphodiester phosphodiesterase that promotes neurite formation and drives spinal motor neuron differentiation. Mediates the cleavage of glycosylphosphatidylinositol (GPI) anchor of target proteins: removes the GPI-anchor of RECK, leading to release RECK from the plasma membrane. May contribute to the osmotic regulation of cellular glycerophosphocholine. The sequence is that of Glycerophosphodiester phosphodiesterase domain-containing protein 5 from Homo sapiens (Human).